The sequence spans 496 residues: MKQHLRPIMFVGTCSDAGKSVINAAFCRIFKQDGYQPAPFKAQNMSLNSYSTPEGGEMGRAQVVQAEACGISPHTDMNPILLKPTNDKSSQVVLNGKPVGNMSAKDYFGIQNQKEELFKEAIEAFKRLEARYNPIVLEGAGSISELNLRDRDITNMRMAIAAGASTYLVADIDRGGVFGSVYGTIALLRPEERVLMKGVIINKFRGDASLFEEGRSLLKELTGIPVVGVIPWFRDIKIEEEDSVALDMKNNTYKDGKINVAIILLKRMSNFTDFDVLEMDPRFNPYYTNNIDEIEKADIILLPGSKNTLSDLQSLRANGIAMAIIRAHKAGKKVIGICGGYQMMGVRLEDPESIEGNIPAIPGLGLLPQCTVIEQEKITRQSDFAFLPSSENKDCKGYEIHMGRTTLLGDAPEQPVARLEDGRTDGYYLNNRCWGSYMHGILDNPAVLDNLAEGFDTETTTGPFDYAAFKEEQYDKLAALVREHVDMEYIYNSIKN.

A GATase cobBQ-type domain is found at 257 to 447 (KINVAIILLK…MHGILDNPAV (191 aa)). Cys338 acts as the Nucleophile in catalysis. His439 is an active-site residue.

Belongs to the CobB/CobQ family. CobQ subfamily.

It functions in the pathway cofactor biosynthesis; adenosylcobalamin biosynthesis. Its function is as follows. Catalyzes amidations at positions B, D, E, and G on adenosylcobyrinic A,C-diamide. NH(2) groups are provided by glutamine, and one molecule of ATP is hydrogenolyzed for each amidation. The chain is Cobyric acid synthase from Parabacteroides distasonis (strain ATCC 8503 / DSM 20701 / CIP 104284 / JCM 5825 / NCTC 11152).